Here is a 132-residue protein sequence, read N- to C-terminus: uncharacterized protein (132 aa).

A helical membrane pass occupies residues 66-86 (LPPMLLVLAALFVKGLIPLVL).

It localises to the membrane. This is an uncharacterized protein from Saccharomyces cerevisiae (strain ATCC 204508 / S288c) (Baker's yeast).